We begin with the raw amino-acid sequence, 642 residues long: Threonine--tRNA ligase (642 aa).

The 61-residue stretch at 1–61 folds into the TGS domain; it reads MPIITLPDGS…STDSDLSIIT (61 aa). A catalytic region spans residues 243–534; the sequence is DHRKIGKQLD…LIEEYAGKFP (292 aa). 3 residues coordinate Zn(2+): cysteine 334, histidine 385, and histidine 511.

This sequence belongs to the class-II aminoacyl-tRNA synthetase family. As to quaternary structure, homodimer. Zn(2+) serves as cofactor.

Its subcellular location is the cytoplasm. The enzyme catalyses tRNA(Thr) + L-threonine + ATP = L-threonyl-tRNA(Thr) + AMP + diphosphate + H(+). Catalyzes the attachment of threonine to tRNA(Thr) in a two-step reaction: L-threonine is first activated by ATP to form Thr-AMP and then transferred to the acceptor end of tRNA(Thr). Also edits incorrectly charged L-seryl-tRNA(Thr). The protein is Threonine--tRNA ligase of Shewanella denitrificans (strain OS217 / ATCC BAA-1090 / DSM 15013).